We begin with the raw amino-acid sequence, 293 residues long: Digeranylgeranylglyceryl phosphate synthase (293 aa).

7 helical membrane passes run Leu26–Leu46, Leu50–Phe70, Phe107–Leu127, Phe140–Ile160, Ile215–Pro235, Phe237–Val257, and Tyr273–Phe293.

It belongs to the UbiA prenyltransferase family. DGGGP synthase subfamily. Requires Mg(2+) as cofactor.

It is found in the cell membrane. It catalyses the reaction sn-3-O-(geranylgeranyl)glycerol 1-phosphate + (2E,6E,10E)-geranylgeranyl diphosphate = 2,3-bis-O-(geranylgeranyl)-sn-glycerol 1-phosphate + diphosphate. It participates in membrane lipid metabolism; glycerophospholipid metabolism. Functionally, prenyltransferase that catalyzes the transfer of the geranylgeranyl moiety of geranylgeranyl diphosphate (GGPP) to the C2 hydroxyl of (S)-3-O-geranylgeranylglyceryl phosphate (GGGP). This reaction is the second ether-bond-formation step in the biosynthesis of archaeal membrane lipids. This Archaeoglobus fulgidus (strain ATCC 49558 / DSM 4304 / JCM 9628 / NBRC 100126 / VC-16) protein is Digeranylgeranylglyceryl phosphate synthase.